Reading from the N-terminus, the 215-residue chain is Probable transaldolase (215 aa).

Lys83 functions as the Schiff-base intermediate with substrate in the catalytic mechanism.

This sequence belongs to the transaldolase family. Type 3B subfamily.

Its subcellular location is the cytoplasm. It catalyses the reaction D-sedoheptulose 7-phosphate + D-glyceraldehyde 3-phosphate = D-erythrose 4-phosphate + beta-D-fructose 6-phosphate. Its pathway is carbohydrate degradation; pentose phosphate pathway; D-glyceraldehyde 3-phosphate and beta-D-fructose 6-phosphate from D-ribose 5-phosphate and D-xylulose 5-phosphate (non-oxidative stage): step 2/3. In terms of biological role, transaldolase is important for the balance of metabolites in the pentose-phosphate pathway. The polypeptide is Probable transaldolase (tal) (Clostridium acetobutylicum (strain ATCC 824 / DSM 792 / JCM 1419 / IAM 19013 / LMG 5710 / NBRC 13948 / NRRL B-527 / VKM B-1787 / 2291 / W)).